The sequence spans 695 residues: Phenoloxidase subunit 2 (695 aa).

Positions 215, 219, and 245 each coordinate Cu cation. Residue glutamate 353 is the Proton acceptor of the active site. Residues histidine 368, histidine 372, and histidine 408 each contribute to the Cu cation site. 2 cysteine pairs are disulfide-bonded: cysteine 586-cysteine 630 and cysteine 588-cysteine 637.

As to quaternary structure, heterodimer. Forms a complex with an interleukin 1-like protein as a consequence of a host defense response. Cu(2+) is required as a cofactor. The N-terminus is blocked. As to expression, synthesized by oenocytoids, a type of hemocyte, and released into the hemolymph plasma.

It localises to the secreted. The catalysed reaction is 2 L-dopa + O2 = 2 L-dopaquinone + 2 H2O. It catalyses the reaction L-tyrosine + O2 = L-dopaquinone + H2O. Activated by immulectin and lipopolysaccharide. Its function is as follows. This is a copper-containing oxidase that functions in the formation of pigments such as melanins and other polyphenolic compounds. Catalyzes the rate-limiting conversions of tyrosine to DOPA, DOPA to DOPA-quinone and possibly 5,6 dihydroxyindole to indole-5'6 quinone. Binds to the surface of hemocytes and is involved in hemocyte melanization. The chain is Phenoloxidase subunit 2 from Manduca sexta (Tobacco hawkmoth).